Reading from the N-terminus, the 48-residue chain is Toxin CSTX-14 (48 aa).

Disulfide bonds link C3-C18, C10-C27, C17-C42, and C29-C40.

Belongs to the neurotoxin 19 (CSTX) family. 12 subfamily. Heterodimer of A and B chains; disulfide-linked. Post-translationally, contains 4 disulfide bonds. Expressed by the venom gland.

Its subcellular location is the secreted. The sequence is that of Toxin CSTX-14 from Cupiennius salei (American wandering spider).